The chain runs to 329 residues: tRNA N6-adenosine threonylcarbamoyltransferase (329 aa).

Residues His107 and His111 each contribute to the Fe cation site. Substrate contacts are provided by residues 129–133 (LVSGG), Asp162, Gly175, and Asn268. Asp296 lines the Fe cation pocket.

The protein belongs to the KAE1 / TsaD family. The cofactor is Fe(2+).

It is found in the cytoplasm. It catalyses the reaction L-threonylcarbamoyladenylate + adenosine(37) in tRNA = N(6)-L-threonylcarbamoyladenosine(37) in tRNA + AMP + H(+). Its function is as follows. Required for the formation of a threonylcarbamoyl group on adenosine at position 37 (t(6)A37) in tRNAs that read codons beginning with adenine. Is involved in the transfer of the threonylcarbamoyl moiety of threonylcarbamoyl-AMP (TC-AMP) to the N6 group of A37, together with TsaE and TsaB. TsaD likely plays a direct catalytic role in this reaction. This Nitratiruptor sp. (strain SB155-2) protein is tRNA N6-adenosine threonylcarbamoyltransferase.